The following is a 346-amino-acid chain: Lipase chaperone (346 aa).

A helical membrane pass occupies residues Thr10–Phe30.

This sequence belongs to the lipase chaperone family.

The protein resides in the cell inner membrane. May be involved in the folding of the extracellular lipase during its passage through the periplasm. This is Lipase chaperone (lifO) from Acinetobacter venetianus (strain ATCC 31012 / DSM 23050 / BCRC 14357 / CCUG 45561 / CIP 110063 / KCTC 2702 / LMG 19082 / RAG-1).